A 684-amino-acid polypeptide reads, in one-letter code: DNA ligase (684 aa).

Residues D34–D38, S83–L84, and E117 contribute to the NAD(+) site. Residue K119 is the N6-AMP-lysine intermediate of the active site. Positions 140, 188, 301, and 325 each coordinate NAD(+). Residues C419, C422, C437, and C443 each contribute to the Zn(2+) site. The BRCT domain maps to D602–D684.

This sequence belongs to the NAD-dependent DNA ligase family. LigA subfamily. Mg(2+) serves as cofactor. It depends on Mn(2+) as a cofactor.

The enzyme catalyses NAD(+) + (deoxyribonucleotide)n-3'-hydroxyl + 5'-phospho-(deoxyribonucleotide)m = (deoxyribonucleotide)n+m + AMP + beta-nicotinamide D-nucleotide.. In terms of biological role, DNA ligase that catalyzes the formation of phosphodiester linkages between 5'-phosphoryl and 3'-hydroxyl groups in double-stranded DNA using NAD as a coenzyme and as the energy source for the reaction. It is essential for DNA replication and repair of damaged DNA. The sequence is that of DNA ligase from Chloroherpeton thalassium (strain ATCC 35110 / GB-78).